Consider the following 147-residue polypeptide: Signal peptidase complex subunit 3 (147 aa).

The Cytoplasmic portion of the chain corresponds to 1–6; it reads MHSWVQ. A helical; Signal-anchor for type II membrane protein transmembrane segment spans residues 7-29; the sequence is RLLTTATTAALLLLAACCAASAL. The Lumenal portion of the chain corresponds to 30 to 147; the sequence is DAFHVPSVQA…EFNLPDSYTS (118 aa).

This sequence belongs to the SPCS3 family. In terms of assembly, component of the signal peptidase complex (SPC) composed of a catalytic subunit SEC11 and three accessory subunits SPCS1, SPCS2 and SPCS3. The complex induces a local thinning of the ER membrane which is used to measure the length of the signal peptide (SP) h-region of protein substrates. This ensures the selectivity of the complex towards h-regions shorter than 18-20 amino acids.

It localises to the endoplasmic reticulum membrane. In terms of biological role, essential component of the signal peptidase complex (SPC) which catalyzes the cleavage of N-terminal signal sequences from nascent proteins as they are translocated into the lumen of the endoplasmic reticulum. Essential for the SPC catalytic activity, possibly by stabilizing and positioning the active center of the complex close to the lumenal surface. This chain is Signal peptidase complex subunit 3, found in Oryza sativa subsp. japonica (Rice).